Reading from the N-terminus, the 447-residue chain is Protein mab-21-like 4 (447 aa).

This Homo sapiens (Human) protein is Protein mab-21-like 4.